The primary structure comprises 256 residues: MNDQRKGSDAEPTTHFGYKNVPESQKAEKVAEVFHSVAAKYDLMNDLLSGGMHRLWKRFAIELSGVRTGNRVLDIAGGTGDLTRKFSNLVGPTGQVVLADINASMLKVGRDRLLDLGVSGNVEFVQADAEKLPFPDNHFDCVTIAFGLRNVTHKEDALRSMLRVLKPGGRLLVLEFSKPTNKLMSKAYDAYSFAFMPLMGKLVTNDSESYRYLAESIRMHPNQETLKSMMVEAGFDRVTYHNMTAGVVALHRGIKP.

S-adenosyl-L-methionine-binding positions include Thr79, Asp100, and 128–129; that span reads DA.

Belongs to the class I-like SAM-binding methyltransferase superfamily. MenG/UbiE family.

It catalyses the reaction a 2-demethylmenaquinol + S-adenosyl-L-methionine = a menaquinol + S-adenosyl-L-homocysteine + H(+). The catalysed reaction is a 2-methoxy-6-(all-trans-polyprenyl)benzene-1,4-diol + S-adenosyl-L-methionine = a 5-methoxy-2-methyl-3-(all-trans-polyprenyl)benzene-1,4-diol + S-adenosyl-L-homocysteine + H(+). Its pathway is quinol/quinone metabolism; menaquinone biosynthesis; menaquinol from 1,4-dihydroxy-2-naphthoate: step 2/2. It functions in the pathway cofactor biosynthesis; ubiquinone biosynthesis. In terms of biological role, methyltransferase required for the conversion of demethylmenaquinol (DMKH2) to menaquinol (MKH2) and the conversion of 2-polyprenyl-6-methoxy-1,4-benzoquinol (DDMQH2) to 2-polyprenyl-3-methyl-6-methoxy-1,4-benzoquinol (DMQH2). In Pseudomonas savastanoi pv. phaseolicola (strain 1448A / Race 6) (Pseudomonas syringae pv. phaseolicola (strain 1448A / Race 6)), this protein is Ubiquinone/menaquinone biosynthesis C-methyltransferase UbiE.